The sequence spans 533 residues: Glucomannan 4-beta-mannosyltransferase 9 (533 aa).

Residues 37–57 form a helical membrane-spanning segment; it reads IVPALRLGVYICLTMSVMLFV. Residue Asp-136 is part of the active site. The substrate site is built by Asp-195 and Asp-197. Residue Asp-289 is part of the active site. 4 helical membrane passes run 368-388, 404-426, 483-503, and 510-530; these read LVAH…TVLV, VITL…WILF, VLEL…AFFG, and YLFA…GTIV.

This sequence belongs to the glycosyltransferase 2 family. Plant cellulose synthase-like A subfamily. Expressed in cotyledons at the base of the hypocotyls, in root elongation zone, lateral root primordia, vascular system of young leaves, abscission zone of the pedicle,.

The protein resides in the golgi apparatus membrane. The enzyme catalyses GDP-mannose + (glucomannan)n = GDP + (glucomannan)n+1.. In terms of biological role, possesses glucomannan synthase and mannan synthase activities in vitro. Mannan synthase consists of a 4-beta-mannosyltransferase activity on mannan using GDP-mannose. The beta-1,4-mannan product is the backbone for galactomannan synthesis by galactomannan galactosyltransferase. Galactomannan is a noncellulosic polysaccharides of plant cell wall. Required for lateral root development. The chain is Glucomannan 4-beta-mannosyltransferase 9 from Arabidopsis thaliana (Mouse-ear cress).